Here is a 115-residue protein sequence, read N- to C-terminus: Virion membrane protein OPG147 (115 aa).

A helical; Signal-anchor for type III membrane protein membrane pass occupies residues 1–21 (MITLFLILCYFILIFNIIVPA).

It belongs to the orthopoxvirus OPG147 family. In terms of assembly, part of a stable entry-fusion complex (EFC) which is at least composed of proteins OPG143, OPG147, OPG155, OPG086, OPG094, OPG107, OPG104, and OPG099. Formation of the viral membrane is necessary for the assembly of the complex. Contains two intramolecular disulfide bonds. They are created by the viral disulfide bond formation pathway, a poxvirus-specific pathway that operates on the cytoplasmic side of the MV membranes.

The protein localises to the virion membrane. Functionally, envelope protein part of the entry-fusion complex responsible for the virus membrane fusion with host cell membrane during virus entry. Also plays a role in cell-cell fusion (syncytium formation). This is Virion membrane protein OPG147 (OPG147) from Monkeypox virus.